A 90-amino-acid chain; its full sequence is Large ribosomal subunit protein bL27 (90 aa).

Residues 1–22 form a disordered region; that stretch reads MAHKKAGGSSRNGRDSESKRLG.

The protein belongs to the bacterial ribosomal protein bL27 family.

In Allorhizobium ampelinum (strain ATCC BAA-846 / DSM 112012 / S4) (Agrobacterium vitis (strain S4)), this protein is Large ribosomal subunit protein bL27.